Here is a 61-residue protein sequence, read N- to C-terminus: Photosystem II reaction center protein K (61 aa).

Residues M1–A24 constitute a propeptide that is removed on maturation. A helical transmembrane segment spans residues I32 to F52.

This sequence belongs to the PsbK family. As to quaternary structure, PSII is composed of 1 copy each of membrane proteins PsbA, PsbB, PsbC, PsbD, PsbE, PsbF, PsbH, PsbI, PsbJ, PsbK, PsbL, PsbM, PsbT, PsbX, PsbY, PsbZ, Psb30/Ycf12, at least 3 peripheral proteins of the oxygen-evolving complex and a large number of cofactors. It forms dimeric complexes.

Its subcellular location is the plastid. The protein resides in the chloroplast thylakoid membrane. In terms of biological role, one of the components of the core complex of photosystem II (PSII). PSII is a light-driven water:plastoquinone oxidoreductase that uses light energy to abstract electrons from H(2)O, generating O(2) and a proton gradient subsequently used for ATP formation. It consists of a core antenna complex that captures photons, and an electron transfer chain that converts photonic excitation into a charge separation. This chain is Photosystem II reaction center protein K, found in Triticum aestivum (Wheat).